A 213-amino-acid chain; its full sequence is Adenylate kinase (213 aa).

An ATP-binding site is contributed by glycine 10–threonine 15. The segment at serine 30–valine 59 is NMP. Residues threonine 31, arginine 36, lysine 57–valine 59, glycine 83–arginine 86, and glutamine 90 contribute to the AMP site. Positions asparagine 124–aspartate 161 are LID. Arginine 125 contributes to the ATP binding site. Zn(2+) is bound by residues cysteine 128 and cysteine 131. Serine 134–phenylalanine 135 is a binding site for ATP. Positions 148 and 151 each coordinate Zn(2+). 2 residues coordinate AMP: arginine 158 and arginine 169. Asparagine 197 is an ATP binding site.

This sequence belongs to the adenylate kinase family. As to quaternary structure, monomer.

It is found in the cytoplasm. The catalysed reaction is AMP + ATP = 2 ADP. It functions in the pathway purine metabolism; AMP biosynthesis via salvage pathway; AMP from ADP: step 1/1. Its function is as follows. Catalyzes the reversible transfer of the terminal phosphate group between ATP and AMP. Plays an important role in cellular energy homeostasis and in adenine nucleotide metabolism. In Mycoplasma capricolum subsp. capricolum (strain California kid / ATCC 27343 / NCTC 10154), this protein is Adenylate kinase.